A 77-amino-acid chain; its full sequence is DNA-directed RNA polymerase subunit epsilon (77 aa).

It belongs to the RNA polymerase subunit epsilon family. In terms of assembly, RNAP is composed of a core of 2 alpha, a beta and a beta' subunit. The core is associated with a delta subunit, and at least one of epsilon or omega. When a sigma factor is associated with the core the holoenzyme is formed, which can initiate transcription.

It catalyses the reaction RNA(n) + a ribonucleoside 5'-triphosphate = RNA(n+1) + diphosphate. In terms of biological role, a non-essential component of RNA polymerase (RNAP). In Streptococcus pneumoniae (strain Hungary19A-6), this protein is DNA-directed RNA polymerase subunit epsilon.